The chain runs to 160 residues: Major strawberry allergen Fra a 1.07 (160 aa).

The protein belongs to the BetVI family. Phosphorylated in vivo. Phosphorylation prevents its activity as ribonuclease. Highly expressed in roots. Expressed a low levels in ripe red fruits.

Functionally, possesses ribonuclease activity in vitro. This is Major strawberry allergen Fra a 1.07 from Fragaria ananassa (Strawberry).